A 281-amino-acid chain; its full sequence is MQKKYYELFFIVEERYKNLFLDFAFDLGIEAIEEKDNGVYIRSHESLEEFSWALEIFAQKLTTTFNLNHKIISNLSLVEKENKDWIQEYKKGIKPILVDNVYIHTTWQEEKKNCINIKINPALAFGSGHHESTYSCVKFLQKFSKSKLRALDLGCGSGILGIIMAKFGCNVEICDTDELAIDSSLENARLNGVDFHKAWCGSIDKANGLYNLIVANIIADVILILEKDIKNHLEDNAILILSGILDKYSTRIKEKFQDLELIDEIQINEWCSFVYKNNKKG.

Residues threonine 133, glycine 154, aspartate 175, and asparagine 216 each contribute to the S-adenosyl-L-methionine site.

Belongs to the methyltransferase superfamily. PrmA family.

The protein resides in the cytoplasm. The catalysed reaction is L-lysyl-[protein] + 3 S-adenosyl-L-methionine = N(6),N(6),N(6)-trimethyl-L-lysyl-[protein] + 3 S-adenosyl-L-homocysteine + 3 H(+). Its function is as follows. Methylates ribosomal protein L11. This Campylobacter jejuni (strain RM1221) protein is Ribosomal protein L11 methyltransferase.